A 242-amino-acid polypeptide reads, in one-letter code: Prosalusin (242 aa).

An N-terminal signal peptide occupies residues 1–26 (MAAATRSCRPWGSLLGLIWLVSAAAA). Residues 27-189 (SWDLSSLRCN…SSWVVYGTNY (163 aa)) constitute a propeptide that is removed on maturation. ATP is bound at residue 93–100 (GWTGTGKS). The N-linked (GlcNAc...) asparagine glycan is linked to Asn-149.

This sequence belongs to the ClpA/ClpB family. Torsin subfamily.

The protein resides in the secreted. Functionally, salusin may be a endocrine and/or paracrine factor able to increase intracellular calcium concentrations and induce cell mitogenesis. Salusin may also be a potent hypotensive peptide. The sequence is that of Prosalusin (TOR2A) from Bos taurus (Bovine).